A 1153-amino-acid polypeptide reads, in one-letter code: Bifunctional dioxygenase (DOX)-epoxy alcohol synthase (EAS) (1153 aa).

Over residues 46–56 (SSKESPSRKSS) the composition is skewed to low complexity. Residues 46–113 (SSKESPSRKS…TQHGDGTYPT (68 aa)) are disordered. Polar residues predominate over residues 57–74 (TIGQSTRNGSCQADTQKG). Positions 81–98 (EKPKPVKENPMKKLKEMS) are enriched in basic and acidic residues. The segment at 177–525 (TDSLINELWE…DGKFDDDDLV (349 aa)) is fatty acid alpha-dioxygenase. A heme b-binding site is contributed by H276. Y454 is an active-site residue. A heme b-binding site is contributed by H457. An epoxy alcohol synthase region spans residues 732 to 1153 (RVNITSYGGA…VTMRVMWDDE (422 aa)). C1086 provides a ligand contact to heme.

It in the N-terminal section; belongs to the peroxidase family. This sequence in the C-terminal section; belongs to the cytochrome P450 family. As to quaternary structure, homotetramer. Requires heme b as cofactor. Heme is required as a cofactor.

It carries out the reaction (9Z)-octadecenoate + O2 = (8R)-hydroperoxy-(9Z)-octadecenoate. The enzyme catalyses (9Z)-octadecenoate + O2 = 10-hydroperoxy-(8E)-octadecenoate. It catalyses the reaction (9Z,12Z)-octadecadienoate + O2 = (8E,10R,12Z)-10-hydroperoxyoctadeca-8,12-dienoate. The catalysed reaction is (9Z,12Z,15Z)-octadecatrienoate + O2 = (10R)-hydroperoxy-(8E,12Z,15Z)-octadecatrienoate. It carries out the reaction (9Z,12Z,15Z)-octadecatrienoate + O2 = (8R)-hydroperoxy-(9Z,12Z,15Z)-octadecatrienoate. The enzyme catalyses (11Z,14Z)-eicosadienoate + O2 = 12-hydroperoxy-(10E,14Z)-eicosadienoate. It catalyses the reaction (11Z,14Z,17Z)-eicosatrienoate + O2 = 12-hydroperoxy-(10E,14Z,17Z)-eicosatrienoate. The catalysed reaction is (12R,13S)-epoxy-(9Z)-octadecenoate + O2 = (12R,13S)-epoxy-(10R)-hydroperoxy-(8E)-octadecenoate. It carries out the reaction (8E,10R,12Z)-10-hydroperoxyoctadeca-8,12-dienoate = (12S,13R)-epoxy-(10R)-hydroxy-(8E)-octadecenoate. The enzyme catalyses (10R)-hydroperoxy-(8E,12Z,15Z)-octadecatrienoate = 12,13-epoxy-(10R)-hydroxy-(8E,15Z)-octadecadienoate. It catalyses the reaction 12-hydroperoxy-(10E,14Z)-eicosadienoate = 10,11-epoxy-12-hydroxy-(14Z)-eicosenoate. The catalysed reaction is 12-hydroperoxy-(10E,14Z,17Z)-eicosatrienoate = 14,15-epoxy-12-hydroxy-(10E,17Z)-eicosadienoate. It carries out the reaction (13R)-hydroperoxy-(9Z,11E)-octadecadienoate = (12R,13R)-epoxy-(11S)-hydroxy-(9Z)-octadecenoate. The enzyme catalyses (13S)-hydroperoxy-(9Z,11E)-octadecadienoate = (12R,13R)-epoxy-(11S)-hydroxy-(9Z)-octadecenoate. It catalyses the reaction 12-hydroperoxy-(10E,14Z)-eicosadienoate = 14,15-epoxy-12-hydroxy-(10E)-eicosenoate. The catalysed reaction is 12-hydroperoxy-(10E,14Z,17Z)-eicosatrienoate = 10,11-epoxy-12-hydroxy-(14Z,17Z)-eicosadienoate. Functionally, bifunctional dioxygenase (DOX)-epoxy alcohol synthase (EAS) that converts linoleic acid (18:2n-6) sequentially to 10(R)-hydroperoxy-8(E),12(Z)-octadecadienoic acid (10R-HPODE) and 10R-HPODE further to 12 S(13R)-epoxy-10(R)-hydroxy-8(E)-octadecenoic acid as the end product. Oxygenation at C-10 occurs by retention of the pro-R hydrogen of C-8 of 18:2n-6, suggesting antarafacial hydrogen abstraction and oxygenation. The epoxy alcohol is formed from 10R-HPODE, likely by heterolytic cleavage of the dioxygen bond and subsequent intramolecular epoxidation of the 12(Z) double bond. The DOX domain is also able to oxygenate position C-8 of linoleic acid to produce 8(R)-hydroperoxy-8(E),12(Z)-octadecadienoic acid (8R-HPODE). Moreover, the DOX domain can oxygenate alpha-linolenic acid (18:3n-3) at C-8 or C-10 to produce respectively 8HOTrE and 10HOTrE, oleic acid (18:1n-9) at C-8 or C-10 to produce respectively 8-H(P)OME and 10-H(P)OME (with 8R stereoisomer to over 95%), eicosadienoic acid (20:2n-6) at C-10 or C-12 to produce respectively 10(11)-epoxy-12-hydroxy-14(Z)-eicosenoic acid and 14(15)-epoxy-12-hydroxy-10(E)-eicosenoic acid, as well as eicosatrienoic acid (20:3n-3) at C-10 or C-12 to produce respectively 10(11)-epoxy-12-hydroxy-14(Z),17(Z)-eicosadienoic acid and 14(15)-epoxy-12-hydroxy-14(Z),17(Z)-eicosadienoic acid. On the other side, the enzyme EAS domain can also catalyze the conversion of 10HOTrE into 12(13)-epoxy-10(R)-hydroxy-8(E),15(Z)-octadecadienoic acid, 13-R-HPODE into the stereoisomers of 12(13)-epoxy-11-hydroxy-9(Z)-octadecenoic acids (erythro/threo, 1:4), as well as 13S-HPODE into the stereoisomers of 12(13)-epoxy-11-hydroxy-9(Z)-octadecenoic acids (erythro/threo, 1:4) (EAS activity). Gamma-linolenic acid (18:3n-6) is not a substrate. In Pyricularia oryzae (strain 70-15 / ATCC MYA-4617 / FGSC 8958) (Rice blast fungus), this protein is Bifunctional dioxygenase (DOX)-epoxy alcohol synthase (EAS).